A 495-amino-acid polypeptide reads, in one-letter code: Polybrominated aromatic compounds synthase (495 aa).

Residue Cys-437 coordinates heme.

Belongs to the cytochrome P450 family. Heme serves as cofactor.

In terms of biological role, cytochrome P450 protein involved in the biosynthesis of polybrominated aromatic organic compounds. In the presence of ferredoxin, ferredoxin reductase and NADH, catalyzes the coupling of bromophenols and bromopyrroles, forming various polybrominated biphenyls and hydroxylated polybrominated diphenyl ethers (OH-BDE). Can also mediate the heterocoupling of 3,5-dibromocatechol, forming six different compounds, including polybrominated dibenzo-p-dioxins, which are among the most toxic molecules known to man. This is Polybrominated aromatic compounds synthase from Marinomonas mediterranea (strain ATCC 700492 / JCM 21426 / NBRC 103028 / MMB-1).